The chain runs to 302 residues: Methionyl-tRNA formyltransferase (302 aa).

109–112 contacts (6S)-5,6,7,8-tetrahydrofolate; that stretch reads SILP.

The protein belongs to the Fmt family.

It carries out the reaction L-methionyl-tRNA(fMet) + (6R)-10-formyltetrahydrofolate = N-formyl-L-methionyl-tRNA(fMet) + (6S)-5,6,7,8-tetrahydrofolate + H(+). In terms of biological role, attaches a formyl group to the free amino group of methionyl-tRNA(fMet). The formyl group appears to play a dual role in the initiator identity of N-formylmethionyl-tRNA by promoting its recognition by IF2 and preventing the misappropriation of this tRNA by the elongation apparatus. The polypeptide is Methionyl-tRNA formyltransferase (Campylobacter hominis (strain ATCC BAA-381 / DSM 21671 / CCUG 45161 / LMG 19568 / NCTC 13146 / CH001A)).